The following is a 287-amino-acid chain: F420-non-reducing hydrogenase vhu subunit G (287 aa).

The protein belongs to the [NiFe]/[NiFeSe] hydrogenase small subunit family. As to quaternary structure, the F420-non-reducing hydrogenase vhu is composed of four subunits; VhuA, VhuD, VhuG and VhuU.

This Methanococcus voltae protein is F420-non-reducing hydrogenase vhu subunit G (vhuG).